Consider the following 130-residue polypeptide: Small ribosomal subunit protein uS11 (130 aa).

It belongs to the universal ribosomal protein uS11 family. In terms of assembly, part of the 30S ribosomal subunit. Interacts with proteins S7 and S18. Binds to IF-3.

Functionally, located on the platform of the 30S subunit, it bridges several disparate RNA helices of the 16S rRNA. Forms part of the Shine-Dalgarno cleft in the 70S ribosome. In Teredinibacter turnerae (strain ATCC 39867 / T7901), this protein is Small ribosomal subunit protein uS11.